A 215-amino-acid polypeptide reads, in one-letter code: Cytochrome b6 (215 aa).

Residues 32-52 form a helical membrane-spanning segment; sequence IFYCLGGITLTCFLVQVATGF. Cys-35 is a binding site for heme c. Heme b-binding residues include His-86 and His-100. The next 3 helical transmembrane spans lie at 90–110, 116–136, and 186–206; these read ASMM…TGGF, LTWV…VTGY, and LHTF…FPMI. Heme b contacts are provided by His-187 and His-202.

It belongs to the cytochrome b family. PetB subfamily. As to quaternary structure, the 4 large subunits of the cytochrome b6-f complex are cytochrome b6, subunit IV (17 kDa polypeptide, PetD), cytochrome f and the Rieske protein, while the 4 small subunits are PetG, PetL, PetM and PetN. The complex functions as a dimer. It depends on heme b as a cofactor. Requires heme c as cofactor.

Its subcellular location is the plastid. The protein localises to the chloroplast thylakoid membrane. In terms of biological role, component of the cytochrome b6-f complex, which mediates electron transfer between photosystem II (PSII) and photosystem I (PSI), cyclic electron flow around PSI, and state transitions. The chain is Cytochrome b6 from Solanum bulbocastanum (Wild potato).